The following is a 428-amino-acid chain: Enolase (428 aa).

Gln-163 lines the (2R)-2-phosphoglycerate pocket. The active-site Proton donor is Glu-205. Mg(2+) contacts are provided by Asp-242, Glu-285, and Asp-312. The (2R)-2-phosphoglycerate site is built by Lys-337, Arg-366, Ser-367, and Lys-388. Lys-337 acts as the Proton acceptor in catalysis.

The protein belongs to the enolase family. Mg(2+) serves as cofactor.

The protein resides in the cytoplasm. Its subcellular location is the secreted. The protein localises to the cell surface. It catalyses the reaction (2R)-2-phosphoglycerate = phosphoenolpyruvate + H2O. Its pathway is carbohydrate degradation; glycolysis; pyruvate from D-glyceraldehyde 3-phosphate: step 4/5. Catalyzes the reversible conversion of 2-phosphoglycerate (2-PG) into phosphoenolpyruvate (PEP). It is essential for the degradation of carbohydrates via glycolysis. The polypeptide is Enolase (Brevibacillus brevis (strain 47 / JCM 6285 / NBRC 100599)).